We begin with the raw amino-acid sequence, 107 residues long: YcgL domain-containing protein Pcryo_0807 (107 aa).

In terms of domain architecture, YcgL spans Met-1–Leu-95.

This is YcgL domain-containing protein Pcryo_0807 from Psychrobacter cryohalolentis (strain ATCC BAA-1226 / DSM 17306 / VKM B-2378 / K5).